The following is a 378-amino-acid chain: Tyrosinase-like protein phomQ1' (378 aa).

Residues 42–62 traverse the membrane as a helical segment; sequence TIIVVSVITFAAIIGCWVFLS. Positions 130 and 139 each coordinate Cu cation. N209 carries an N-linked (GlcNAc...) asparagine glycan. Residues H279 and H305 each contribute to the Cu cation site.

The protein belongs to the tyrosinase family. The cofactor is Cu(2+).

It localises to the membrane. It functions in the pathway mycotoxin biosynthesis. Tyrosinase-like protein; part of the gene cluster that mediates the biosynthesis of the phomopsins, a group of hexapeptide mycotoxins which infects lupins and causes lupinosis disease in livestock. The pathway starts with the processing of the precursor phomA' by several endopeptidases including kexin proteases as well as the cluster-specific S41 family peptidase phomP1 and the oligopeptidase phomG' to produce 10 identical copies of the hexapeptide Tyr-Val-Ile-Pro-Ile-Asp. After being excised from the precursor peptide, the core peptides are cyclized and modified post-translationally by enzymes encoded within the gene cluster. The timing and order of proteolysis of the phomA' precursor and PTMs are still unknown. Two tyrosinase-like enzymes, phomQ1' and phomQ2, catalyze the chlorination and hydroxylation of Tyr, respectively. PhomYb, is proposed to be involved in the construction of the macrocyclic structure. The other 4 ustYa family proteins may be involved in PTMs that generate the unique structure of phomopsin A. PhomYa' is required for the hydroxylation of C-beta of Tyr. PhomYc', phomYd', and phomYe are responsible for the biosynthesis of 2,3-dehydroisoleucine (dIle), 2,3-dehydroaspartic acid (dAsp), and 3,4-dehydroproline (dPro), respectively. While dIle formation by phomYc' is indispensable for the installation of dAsp by phomYd', the order of the other PTMs have not been elucidated yet. Most of the biosynthetic enzymes likely have broad substrate specificity, and thus, there might be a metabolic grid from a precursor to phomopsin A. The enzyme(s) responsible for the biosynthesis of 3,4-dehydrovaline (dVal) have also not been identified yet. Finally, phomM' acts as an S-adenosylmethionine-dependent alpha-N-methyltransferase that catalyzes two successive N-methylation reactions, converting N-desmethyl-phomopsin A to phomopsin A and phomopsin A further to an N,N-dimethylated congener called phomopsin E. The protein is Tyrosinase-like protein phomQ1' of Diaporthe leptostromiformis (Lupinosis disease fungus).